The chain runs to 314 residues: MAATASPGAGRMDGKPRTSPKSVKFLFGGLAGMGATVFVQPLDLVXNRMQLSGEGAKTREYKTSFHALTSILKAEGLRGIYTGLSAGLLRQATYTTTRLGIYTVLFERLTGADGTPPGFLLKALIGMTAGATGAFVGPPAEVALIRMTADGRLPADQRRGYKNVFNALIRIAREEGVPTLWRGCIPTMARAVVVNAAQLASYSQSKQFLLDSGYFSDNILCHFCAIMISGLVTTAASMPVDIVKTRIQNMRMIDEKPEYKNGLDVLLKVVRYEGFFSLWKGFTPYYARLGPHTVLTFIFLEQMNKAYKRLFLSG.

At A2 the chain carries N-acetylalanine. S6 is modified (phosphoserine). Solcar repeat units follow at residues 23 to 108 (VKFL…LFER), 117 to 208 (PGFL…SKQF), and 217 to 306 (DNIL…MNKA). A helical transmembrane segment spans residues 24–42 (KFLFGGLAGMGATVFVQPL). K57 carries the N6-succinyllysine modification. N6-acetyllysine is present on K73. A helical membrane pass occupies residues 83–101 (GLSAGLLRQATYTTTRLGI). Phosphotyrosine is present on Y102. 3 consecutive transmembrane segments (helical) span residues 119–140 (FLLKALIGMTAGATGAFVGPPA), 183–202 (GCIPTMARAVVVNAAQLASY), and 222–240 (HFCAIMISGLVTTAASMPV). K256 carries the N6-acetyllysine modification. A helical membrane pass occupies residues 281–300 (GFTPYYARLGPHTVLTFIFL).

It belongs to the mitochondrial carrier (TC 2.A.29) family. As to quaternary structure, interacts with SMIM26. In terms of tissue distribution, expressed in liver, heart and brain.

It localises to the mitochondrion inner membrane. It catalyses the reaction (S)-malate(in) + 2-oxoglutarate(out) = (S)-malate(out) + 2-oxoglutarate(in). It carries out the reaction malonate(in) + 2-oxoglutarate(out) = malonate(out) + 2-oxoglutarate(in). The catalysed reaction is succinate(in) + 2-oxoglutarate(out) = succinate(out) + 2-oxoglutarate(in). The enzyme catalyses maleate(in) + 2-oxoglutarate(out) = maleate(out) + 2-oxoglutarate(in). It catalyses the reaction oxaloacetate(in) + 2-oxoglutarate(out) = oxaloacetate(out) + 2-oxoglutarate(in). Its function is as follows. Catalyzes the transport of 2-oxoglutarate (alpha-oxoglutarate) across the inner mitochondrial membrane in an electroneutral exchange for malate. Can also exchange 2-oxoglutarate for other dicarboxylic acids such as malonate, succinate, maleate and oxaloacetate, although with lower affinity. Contributes to several metabolic processes, including the malate-aspartate shuttle, the oxoglutarate/isocitrate shuttle, in gluconeogenesis from lactate, and in nitrogen metabolism. Maintains mitochondrial fusion and fission events, and the organization and morphology of cristae. Involved in the regulation of apoptosis. Helps protect from cytotoxic-induced apoptosis by modulating glutathione levels in mitochondria. The sequence is that of Mitochondrial 2-oxoglutarate/malate carrier protein (Slc25a11) from Rattus norvegicus (Rat).